A 515-amino-acid chain; its full sequence is G-protein coupled receptor 176 (515 aa).

Residues 1-16 show a composition bias toward polar residues; it reads MGHNGSWISPNASEPH. The interval 1–20 is disordered; the sequence is MGHNGSWISPNASEPHNASG. The Extracellular portion of the chain corresponds to 1 to 42; sequence MGHNGSWISPNASEPHNASGAEAAGVNRSALGEFGEAQLYRQ. 4 N-linked (GlcNAc...) asparagine glycosylation sites follow: Asn4, Asn11, Asn17, and Asn27. The chain crosses the membrane as a helical span at residues 43–63; that stretch reads FTTTVQVVIFIGSLLGNFMVL. At 64–82 the chain is on the cytoplasmic side; sequence WSTCRTTVFKSVTNRFIKN. Residues 83–103 traverse the membrane as a helical segment; sequence LACSGICASLVCVPFDIILST. The Extracellular portion of the chain corresponds to 104–118; the sequence is SPHCCWWIYTMLFCK. A helical transmembrane segment spans residues 119-139; it reads VVKFLHKVFCSVTILSFPAIA. Topologically, residues 140–160 are cytoplasmic; sequence LDRYYSVLYPLERKISDAKSR. A helical membrane pass occupies residues 161 to 181; that stretch reads ELVMYIWAHAVVASVPVFAVT. Over 182-207 the chain is Extracellular; that stretch reads NVADIYATSTCTEVWSNSLGHLVYVL. A helical transmembrane segment spans residues 208 to 228; it reads VYNITTVIVPVVVVFLFLILI. Residues 229 to 267 lie on the Cytoplasmic side of the membrane; the sequence is RRALSASQKKKVIIAALRTPQNTISIPYASQREAELHAT. A helical membrane pass occupies residues 268–288; it reads LLSMVMVFILCSVPYATLVVY. Over 289–299 the chain is Extracellular; it reads QTVLNVPDTSV. A helical membrane pass occupies residues 300–320; sequence FLLLTAVWLPKVSLLANPVLF. The Cytoplasmic portion of the chain corresponds to 321–515; that stretch reads LTVNKSVRKC…KVSIFPKVDS (195 aa).

It belongs to the G-protein coupled receptor 1 family.

The protein resides in the cell membrane. Orphan receptor involved in normal circadian rhythm behavior. Acts through the G-protein subclass G(z)-alpha and has an agonist-independent basal activity to repress cAMP production. This Homo sapiens (Human) protein is G-protein coupled receptor 176 (GPR176).